The following is a 396-amino-acid chain: MATRATQISTLVEEIANNPNLKEDLKILPSNYTFEVPKTIWKIRSTESKYVALQFPEGLIMYACVIADILEKYTGCDTVIMGDVTYGACCVDDYTAKSMGCDLLVHYGHSCLVPIQNTDGIAMLYVFVNIHINLSHLIDCVKENFQGKRLVVVSTVQFIPSLQTLRTTFNKDDSSIRIDIPQCKPLSPGEVLGCTSPRLDASKYDAIVYLGDGRFHLESIMIHNPEIEAFQYDPYSRKLTREFYDHDLMRKNRIGSIEIARKCTTFGLIQGTLGRQGNLKVVEELEAQLERKGKKFLRVLLSEIFPEKLAMFPEVDCWVQVACPRLSIDWGTQFPKPLLYPFELAVALDNISVPSDHWPMDYYSNDSLGPWTNNNEANRPKREKRKPHIVVRTEAS.

3 residues coordinate [4Fe-4S] cluster: Cys89, Cys194, and Cys323. The disordered stretch occupies residues 372-396 (TNNNEANRPKREKRKPHIVVRTEAS).

Belongs to the DPH1/DPH2 family. DPH1 subfamily. In terms of assembly, component of the 2-(3-amino-3-carboxypropyl)histidine synthase complex composed of dph-1, dph-2, dph-3 and a NADH-dependent reductase. [4Fe-4S] cluster serves as cofactor.

It carries out the reaction L-histidyl-[translation elongation factor 2] + S-adenosyl-L-methionine = 2-[(3S)-amino-3-carboxypropyl]-L-histidyl-[translation elongation factor 2] + S-methyl-5'-thioadenosine + H(+). It participates in protein modification; peptidyl-diphthamide biosynthesis. Catalyzes the first step of diphthamide biosynthesis, a post-translational modification of histidine which occurs in elongation factor 2. Dph-1 and dph-2 transfer a 3-amino-3-carboxypropyl (ACP) group from S-adenosyl-L-methionine (SAM) to a histidine residue, the reaction is assisted by a reduction system comprising dph-3 and a NADH-dependent reductase. This Caenorhabditis elegans protein is 2-(3-amino-3-carboxypropyl)histidine synthase subunit 1 (dph-1).